A 353-amino-acid polypeptide reads, in one-letter code: Protein MGF 360-13L (353 aa).

Belongs to the asfivirus MGF 360 family.

Plays a role in virus cell tropism, and may be required for efficient virus replication in macrophages. This chain is Protein MGF 360-13L, found in African swine fever virus (isolate Pig/Kenya/KEN-50/1950) (ASFV).